Consider the following 219-residue polypeptide: Adenylate kinase (219 aa).

Position 10-15 (glycine 10–threonine 15) interacts with ATP. Residues serine 30 to valine 59 are NMP. AMP contacts are provided by residues threonine 31, arginine 36, glycine 57–valine 59, glycine 85–arginine 88, and glutamine 92. The LID stretch occupies residues glycine 122–aspartate 159. Residues arginine 123 and valine 132–tyrosine 133 each bind ATP. The AMP site is built by arginine 156 and arginine 167. Arginine 202 contributes to the ATP binding site.

Belongs to the adenylate kinase family. As to quaternary structure, monomer.

The protein localises to the cytoplasm. It catalyses the reaction AMP + ATP = 2 ADP. It functions in the pathway purine metabolism; AMP biosynthesis via salvage pathway; AMP from ADP: step 1/1. In terms of biological role, catalyzes the reversible transfer of the terminal phosphate group between ATP and AMP. Plays an important role in cellular energy homeostasis and in adenine nucleotide metabolism. This Acinetobacter baylyi (strain ATCC 33305 / BD413 / ADP1) protein is Adenylate kinase.